The chain runs to 62 residues: Photosystem II reaction center protein Z (62 aa).

A run of 2 helical transmembrane segments spans residues 8–28 and 41–61; these read AVFA…VVFA and FSGT…NSLI.

The protein belongs to the PsbZ family. As to quaternary structure, PSII is composed of 1 copy each of membrane proteins PsbA, PsbB, PsbC, PsbD, PsbE, PsbF, PsbH, PsbI, PsbJ, PsbK, PsbL, PsbM, PsbT, PsbY, PsbZ, Psb30/Ycf12, at least 3 peripheral proteins of the oxygen-evolving complex and a large number of cofactors. It forms dimeric complexes.

It localises to the plastid. The protein resides in the chloroplast thylakoid membrane. Functionally, may control the interaction of photosystem II (PSII) cores with the light-harvesting antenna, regulates electron flow through the 2 photosystem reaction centers. PSII is a light-driven water plastoquinone oxidoreductase, using light energy to abstract electrons from H(2)O, generating a proton gradient subsequently used for ATP formation. The protein is Photosystem II reaction center protein Z of Coffea arabica (Arabian coffee).